The primary structure comprises 306 residues: Armadillo repeat-containing protein 10 (306 aa).

The chain crosses the membrane as a helical span at residues 7–29 (VGWVAAGLVLGAGACYCIYRLTR). A Phosphoserine modification is found at Ser43. Position 48 is a phosphothreonine (Thr48). Residues 101-143 (GGIPIVGSKINSLNQSIKEKALNALNNLSVNVENQTKIKIYVR) form an ARM repeat.

In terms of assembly, interacts with the DNA-binding domain of p53/TP53.

Its subcellular location is the endoplasmic reticulum membrane. The protein resides in the mitochondrion outer membrane. Its function is as follows. May play a role in cell survival and cell growth. May suppress the transcriptional activity of p53/TP53. The protein is Armadillo repeat-containing protein 10 (Armc10) of Rattus norvegicus (Rat).